Consider the following 521-residue polypeptide: MADPISEPLLSHLTDDSGVNEKTRLEALTFDKIVEQSLSDFGFWQFFQISLVGLALLFDAQQIFITVYTDAYPTWHCLNHTICDPSASDICKLPRSAWEWDGGSQGKSVISEFGLECSSSLLRGMPSSAFYIGAIVGGFFLALIPDDSLGRKKLVLFSTFAMSITSISVIFSTNVWIYTFLKFIIGFSRSQTWSYALVLISERVSTRWRPRATMIPFTLFVLGFMSLSGIAFLAQDSSWRYLYLYTSVPAVFYCIFLYLFALESPRWLHMQGKDKEAIDVLTKMSPKEKAYLESVVSKLPLKQENFEQAPTYSIKDFFFRKWAFRRILVVMIIMFGLGISYYGVPLAARDIDVNIYLSETLNALVELPTFVITPILLERFNRRSSVLVNTLLGGASGVLCFVLSILGKTEIAFAFELGTFFCARIGFNLMAVFMVEMFPTCVRSSATMMFRQALVVGGACCPLIASIGRYIPSVSFAIFGIAMSGLGMFVLILPETKGLSLCDSMEEQEKRDQAVNTSHVC.

Over 1–37 (MADPISEPLLSHLTDDSGVNEKTRLEALTFDKIVEQS) the chain is Cytoplasmic. Residues 38 to 58 (LSDFGFWQFFQISLVGLALLF) form a helical membrane-spanning segment. The Extracellular segment spans residues 59–123 (DAQQIFITVY…GLECSSSLLR (65 aa)). N-linked (GlcNAc...) asparagine glycosylation is present at Asn-79. Residues 124–144 (GMPSSAFYIGAIVGGFFLALI) traverse the membrane as a helical segment. Residues 145–154 (PDDSLGRKKL) are Cytoplasmic-facing. A helical membrane pass occupies residues 155 to 177 (VLFSTFAMSITSISVIFSTNVWI). Topologically, residues 178-182 (YTFLK) are extracellular. Residues 183–200 (FIIGFSRSQTWSYALVLI) traverse the membrane as a helical segment. 200-207 (ISERVSTR) is an ATP binding site. The Cytoplasmic segment spans residues 201-213 (SERVSTRWRPRAT). The helical transmembrane segment at 214–234 (MIPFTLFVLGFMSLSGIAFLA) threads the bilayer. Residues 235–241 (QDSSWRY) lie on the Extracellular side of the membrane. The chain crosses the membrane as a helical span at residues 242–262 (LYLYTSVPAVFYCIFLYLFAL). Topologically, residues 263–326 (ESPRWLHMQG…FFFRKWAFRR (64 aa)) are cytoplasmic. The helical transmembrane segment at 327–347 (ILVVMIIMFGLGISYYGVPLA) threads the bilayer. At 348–356 (ARDIDVNIY) the chain is on the extracellular side. A helical transmembrane segment spans residues 357–377 (LSETLNALVELPTFVITPILL). The Cytoplasmic segment spans residues 378 to 385 (ERFNRRSS). The helical transmembrane segment at 386 to 406 (VLVNTLLGGASGVLCFVLSIL) threads the bilayer. Residues 407–412 (GKTEIA) are Extracellular-facing. The helical transmembrane segment at 413–433 (FAFELGTFFCARIGFNLMAVF) threads the bilayer. Topologically, residues 434 to 447 (MVEMFPTCVRSSAT) are cytoplasmic. A helical transmembrane segment spans residues 448-468 (MMFRQALVVGGACCPLIASIG). Residues 469 to 473 (RYIPS) lie on the Extracellular side of the membrane. The helical transmembrane segment at 474-494 (VSFAIFGIAMSGLGMFVLILP) threads the bilayer. Over 495–521 (ETKGLSLCDSMEEQEKRDQAVNTSHVC) the chain is Cytoplasmic.

It belongs to the major facilitator (TC 2.A.1) superfamily. Organic cation transporter (TC 2.A.1.19) family. In terms of tissue distribution, expressed in roots and stems. In the stem of secondary inflorescences, localized to the phloem. Also present in flowers, specifically in the stamen, in the filaments and the connective, and restricted to major veins in leaves.

The protein resides in the vacuole membrane. Its function is as follows. High affinity carnitine transporter involved in the active cellular uptake of carnitine. Also transports organic cations. The protein is Organic cation/carnitine transporter 6 (OCT6) of Arabidopsis thaliana (Mouse-ear cress).